Consider the following 960-residue polypeptide: Collagenase ColA (960 aa).

Residues 1 to 30 (MNKNLRFTQMMIGISTMALSFGSIQTQVSA) form the signal peptide. A propeptide spanning residues 31–92 (EETAPYNILQ…KRDEIQLKQS (62 aa)) is cleaved from the precursor. The segment at 93-365 (YTLAELNKMP…AVEQMKTNYG (273 aa)) is activator domain. The interval 93–764 (YTLAELNKMP…VFHGVATEEK (672 aa)) is S1 metalloprotease domain. The interval 375 to 644 (DLQKIREEGK…MQQLIDNQDK (270 aa)) is catalytic subdomain. His-500 is a Zn(2+) binding site. Residue Glu-501 is part of the active site. Zn(2+) contacts are provided by His-504 and Glu-532. A helper subdomain region spans residues 652 to 764 (NDYLIQHAPK…VFHGVATEEK (113 aa)). The PKD domain occupies 768–849 (TTIVNMNGPY…ESKEQTKVTV (82 aa)). The segment covering 836–845 (SRGKESKEQT) has biased composition (basic and acidic residues). Residues 836 to 859 (SRGKESKEQTKVTVKQDPQTSESY) are disordered. The segment covering 846–857 (KVTVKQDPQTSE) has biased composition (polar residues). The tract at residues 852-960 (DPQTSESYEE…KNGEYSLLVK (109 aa)) is collagen-binding domain.

The protein belongs to the peptidase M9B family. Collagenase subfamily. Ca(2+) is required as a cofactor. It depends on Zn(2+) as a cofactor.

It is found in the secreted. It carries out the reaction Digestion of native collagen in the triple helical region at Xaa-|-Gly bonds. With synthetic peptides, a preference is shown for Gly at P3 and P1', Pro and Ala at P2 and P2', and hydroxyproline, Ala or Arg at P3'.. In terms of biological role, acts as a true collagenase, which is highly active and efficiently targets native tropocollagen. In vitro, can also cleave gelatin and the synthetic peptide FALGPA (furylacryloyl-Leu-Gly-Pro-Ala). May contribute to bacterial virulence in endophthalmitis or opportunistic infections via collagen degradation in the host extracellular matrix (ECM). In Bacillus cereus (strain ATCC 14579 / DSM 31 / CCUG 7414 / JCM 2152 / NBRC 15305 / NCIMB 9373 / NCTC 2599 / NRRL B-3711), this protein is Collagenase ColA.